Consider the following 282-residue polypeptide: Formamidopyrimidine-DNA glycosylase (282 aa).

Proline 2 (schiff-base intermediate with DNA) is an active-site residue. The active-site Proton donor is glutamate 3. Catalysis depends on lysine 60, which acts as the Proton donor; for beta-elimination activity. Positions 99, 118, and 163 each coordinate DNA. The FPG-type zinc finger occupies 248–282 (WVYRRSGKNCKKCGEKILREKICGRSTHWCPNCQK). Residue arginine 272 is the Proton donor; for delta-elimination activity of the active site.

This sequence belongs to the FPG family. In terms of assembly, monomer. The cofactor is Zn(2+).

It carries out the reaction Hydrolysis of DNA containing ring-opened 7-methylguanine residues, releasing 2,6-diamino-4-hydroxy-5-(N-methyl)formamidopyrimidine.. The enzyme catalyses 2'-deoxyribonucleotide-(2'-deoxyribose 5'-phosphate)-2'-deoxyribonucleotide-DNA = a 3'-end 2'-deoxyribonucleotide-(2,3-dehydro-2,3-deoxyribose 5'-phosphate)-DNA + a 5'-end 5'-phospho-2'-deoxyribonucleoside-DNA + H(+). Involved in base excision repair of DNA damaged by oxidation or by mutagenic agents. Acts as a DNA glycosylase that recognizes and removes damaged bases. Has a preference for oxidized purines, such as 7,8-dihydro-8-oxoguanine (8-oxoG). Has AP (apurinic/apyrimidinic) lyase activity and introduces nicks in the DNA strand. Cleaves the DNA backbone by beta-delta elimination to generate a single-strand break at the site of the removed base with both 3'- and 5'-phosphates. This chain is Formamidopyrimidine-DNA glycosylase, found in Prochlorococcus marinus (strain NATL2A).